A 148-amino-acid chain; its full sequence is Ribonuclease pancreatic (148 aa).

Residues Met-1–Gly-25 form the signal peptide. Positions 32 and 35 each coordinate substrate. The active-site Proton acceptor is His-36. 4 disulfide bridges follow: Cys-50–Cys-108, Cys-64–Cys-119, Cys-82–Cys-134, and Cys-89–Cys-96. N-linked (GlcNAc...) asparagine glycosylation is present at Asn-58. Lys-65 to Thr-69 contacts substrate. Asn-86 carries an N-linked (GlcNAc...) asparagine glycan. The substrate site is built by Lys-90 and Arg-109. The active-site Proton donor is His-143.

It belongs to the pancreatic ribonuclease family. As to quaternary structure, monomer. Interacts with and forms tight 1:1 complexes with RNH1. Dimerization of two such complexes may occur. Interaction with RNH1 inhibits this protein. In terms of tissue distribution, pancreas.

Its subcellular location is the secreted. The enzyme catalyses an [RNA] containing cytidine + H2O = an [RNA]-3'-cytidine-3'-phosphate + a 5'-hydroxy-ribonucleotide-3'-[RNA].. The catalysed reaction is an [RNA] containing uridine + H2O = an [RNA]-3'-uridine-3'-phosphate + a 5'-hydroxy-ribonucleotide-3'-[RNA].. Functionally, endonuclease that catalyzes the cleavage of RNA on the 3' side of pyrimidine nucleotides. Acts on single-stranded and double-stranded RNA. The chain is Ribonuclease pancreatic (RNASE1) from Chionomys nivalis (European snow vole).